The chain runs to 297 residues: PsbP domain-containing protein 5, chloroplastic (297 aa).

The protein belongs to the PsbP family.

It localises to the plastid. The protein localises to the chloroplast thylakoid lumen. Involved in strigolactone biosynthesis. The protein is PsbP domain-containing protein 5, chloroplastic (PPD5) of Arabidopsis thaliana (Mouse-ear cress).